The sequence spans 445 residues: Bifunctional protein GlmU (445 aa).

Residues 1–218 (MRALVLAAGK…LLEITGVNTR (218 aa)) form a pyrophosphorylase region. UDP-N-acetyl-alpha-D-glucosamine is bound by residues 6 to 9 (LAAG), lysine 20, glutamine 69, 74 to 75 (GT), 96 to 98 (YGD), glycine 134, glutamate 147, asparagine 162, and asparagine 216. Residue aspartate 98 coordinates Mg(2+). Asparagine 216 is a Mg(2+) binding site. The tract at residues 219 to 239 (KTLVWLEEQLRMRKIEELLEN) is linker. An N-acetyltransferase region spans residues 240–445 (GVTILDPATT…GWVLKKRKEE (206 aa)). Residues arginine 321 and lysine 339 each coordinate UDP-N-acetyl-alpha-D-glucosamine. The Proton acceptor role is filled by histidine 351. UDP-N-acetyl-alpha-D-glucosamine-binding residues include tyrosine 354 and asparagine 365. Acetyl-CoA is bound by residues alanine 368, 374-375 (NY), serine 393, alanine 411, and arginine 428.

The protein in the N-terminal section; belongs to the N-acetylglucosamine-1-phosphate uridyltransferase family. In the C-terminal section; belongs to the transferase hexapeptide repeat family. As to quaternary structure, homotrimer. The cofactor is Mg(2+).

The protein resides in the cytoplasm. It catalyses the reaction alpha-D-glucosamine 1-phosphate + acetyl-CoA = N-acetyl-alpha-D-glucosamine 1-phosphate + CoA + H(+). The enzyme catalyses N-acetyl-alpha-D-glucosamine 1-phosphate + UTP + H(+) = UDP-N-acetyl-alpha-D-glucosamine + diphosphate. The protein operates within nucleotide-sugar biosynthesis; UDP-N-acetyl-alpha-D-glucosamine biosynthesis; N-acetyl-alpha-D-glucosamine 1-phosphate from alpha-D-glucosamine 6-phosphate (route II): step 2/2. Its pathway is nucleotide-sugar biosynthesis; UDP-N-acetyl-alpha-D-glucosamine biosynthesis; UDP-N-acetyl-alpha-D-glucosamine from N-acetyl-alpha-D-glucosamine 1-phosphate: step 1/1. It participates in bacterial outer membrane biogenesis; LPS lipid A biosynthesis. Its function is as follows. Catalyzes the last two sequential reactions in the de novo biosynthetic pathway for UDP-N-acetylglucosamine (UDP-GlcNAc). The C-terminal domain catalyzes the transfer of acetyl group from acetyl coenzyme A to glucosamine-1-phosphate (GlcN-1-P) to produce N-acetylglucosamine-1-phosphate (GlcNAc-1-P), which is converted into UDP-GlcNAc by the transfer of uridine 5-monophosphate (from uridine 5-triphosphate), a reaction catalyzed by the N-terminal domain. The protein is Bifunctional protein GlmU of Thermotoga maritima (strain ATCC 43589 / DSM 3109 / JCM 10099 / NBRC 100826 / MSB8).